A 150-amino-acid polypeptide reads, in one-letter code: Ribonuclease H (150 aa).

The RNase H type-1 domain maps to 1-141 (MRPVIIHTDG…ADQLARDGLT (141 aa)). 4 residues coordinate Mg(2+): Asp9, Glu47, Asp69, and Asp133.

It belongs to the RNase H family. As to quaternary structure, monomer. It depends on Mg(2+) as a cofactor.

The protein resides in the cytoplasm. It carries out the reaction Endonucleolytic cleavage to 5'-phosphomonoester.. In terms of biological role, endonuclease that specifically degrades the RNA of RNA-DNA hybrids. The protein is Ribonuclease H of Rhodopseudomonas palustris (strain BisB5).